Reading from the N-terminus, the 278-residue chain is UPF0761 membrane protein NT05HA_1801 (278 aa).

6 consecutive transmembrane segments (helical) span residues 32 to 52 (MLAI…FPVF), 88 to 108 (QMSA…INSI), 123 to 143 (PIFT…LLVG), 168 to 188 (LLSF…YMVV), 203 to 223 (LIAA…IVTF), and 232 to 252 (AMAT…FVLL).

Belongs to the UPF0761 family.

Its subcellular location is the cell inner membrane. The protein is UPF0761 membrane protein NT05HA_1801 of Aggregatibacter aphrophilus (strain NJ8700) (Haemophilus aphrophilus).